A 464-amino-acid polypeptide reads, in one-letter code: Cytoplasmic tRNA 2-thiolation protein 2 (464 aa).

This sequence belongs to the CTU2/NCS2 family.

The protein localises to the cytoplasm. It participates in tRNA modification; 5-methoxycarbonylmethyl-2-thiouridine-tRNA biosynthesis. In terms of biological role, plays a central role in 2-thiolation of mcm(5)S(2)U at tRNA wobble positions of tRNA(Lys), tRNA(Glu) and tRNA(Gln). May act by forming a heterodimer with NCS6/CTU1 that ligates sulfur from thiocarboxylated URM1 onto the uridine of tRNAs at wobble position. The protein is Cytoplasmic tRNA 2-thiolation protein 2 of Oryza sativa subsp. japonica (Rice).